Reading from the N-terminus, the 525-residue chain is Averantin hydroxylase (525 aa).

A helical transmembrane segment spans residues 36-56 (VLATFVAGIGALLLWTLTTVF). The N-linked (GlcNAc...) asparagine glycan is linked to Asn-315. Cys-462 provides a ligand contact to heme.

It belongs to the cytochrome P450 family. Heme is required as a cofactor.

It is found in the membrane. It catalyses the reaction (1'S)-averantin + reduced [NADPH--hemoprotein reductase] + O2 = (1'S,5'R)-5'-hydroxyaverantin + oxidized [NADPH--hemoprotein reductase] + H2O. The enzyme catalyses (1'S)-averantin + reduced [NADPH--hemoprotein reductase] + O2 = (1'S,5'S)-5'-hydroxyaverantin + oxidized [NADPH--hemoprotein reductase] + H2O + H(+). It participates in mycotoxin biosynthesis. Its function is as follows. Averantin hydroxylase; part of the fragmented gene cluster that mediates the biosynthesis of dothistromin (DOTH), a polyketide toxin very similar in structure to the aflatoxin precursor, versicolorin B. The first step of the pathway is the conversion of acetate to norsolorinic acid (NOR) and requires the fatty acid synthase subunits hexA and hexB, as well as the polyketide synthase pksA. PksA combines a hexanoyl starter unit and 7 malonyl-CoA extender units to synthesize the precursor NOR. The hexanoyl starter unit is provided to the acyl-carrier protein (ACP) domain by the fungal fatty acid synthase hexA/hexB. The second step is the conversion of NOR to averantin (AVN) and requires the norsolorinic acid ketoreductase nor1, which catalyzes the dehydration of norsolorinic acid to form (1'S)-averantin. The cytochrome P450 monooxygenase avnA then catalyzes the hydroxylation of AVN to 5'hydroxyaverantin (HAVN). The next step is performed by adhA that transforms HAVN to averufin (AVF). Averufin might then be converted to hydroxyversicolorone by cypX and avfA. Hydroxyversicolorone is further converted versiconal hemiacetal acetate (VHA) by moxY. VHA is then the substrate for the versiconal hemiacetal acetate esterase est1 to yield versiconal (VAL). Versicolorin B synthase vbsA then converts VAL to versicolorin B (VERB) by closing the bisfuran ring. Then, the activity of the versicolorin B desaturase verB leads to versicolorin A (VERA). DotB, a predicted chloroperoxidase, may perform epoxidation of the A-ring of VERA. Alternatively, a cytochrome P450, such as cypX or avnA could catalyze this step. It is also possible that another, uncharacterized, cytochrome P450 enzyme is responsible for this step. Opening of the epoxide could potentially be achieved by the epoxide hydrolase epoA. However, epoA seems not to be required for DOTH biosynthesis, but other epoxide hydrolases may have the ability to complement this hydrolysis. Alternatively, opening of the epoxide ring could be achieved non-enzymatically. The next step is the deoxygenation of ring A to yield the 5,8-dihydroxyanthraquinone which is most likely catalyzed by the NADPH dehydrogenase encoded by ver1. The last stages of DOTH biosynthesis are proposed to involve hydroxylation of the bisfuran. OrdB and norB might have oxidative roles here. An alternative possibility is that cytochrome P450 monoogenases such as avnA and cypX might perform these steps in addition to previously proposed steps. The chain is Averantin hydroxylase from Dothistroma septosporum (strain NZE10 / CBS 128990) (Red band needle blight fungus).